The primary structure comprises 214 residues: Pyrrolidone-carboxylate peptidase (214 aa).

Active-site residues include Glu80, Cys143, and His166.

Belongs to the peptidase C15 family. In terms of assembly, homotetramer.

Its subcellular location is the cytoplasm. It catalyses the reaction Release of an N-terminal pyroglutamyl group from a polypeptide, the second amino acid generally not being Pro.. Functionally, removes 5-oxoproline from various penultimate amino acid residues except L-proline. The protein is Pyrrolidone-carboxylate peptidase of Escherichia fergusonii (strain ATCC 35469 / DSM 13698 / CCUG 18766 / IAM 14443 / JCM 21226 / LMG 7866 / NBRC 102419 / NCTC 12128 / CDC 0568-73).